Reading from the N-terminus, the 805-residue chain is U-box domain-containing protein 32 (805 aa).

Disordered stretches follow at residues 181 to 205 (SNNRQTMPPLVQLDSDNETRKSEKL) and 226 to 284 (EKDT…EREG). Residues 226–239 (EKDTGQLEREKVEP) are compositionally biased toward basic and acidic residues. The span at 245–257 (FSSGSSSSFGEPV) shows a compositional bias: low complexity. Positions 331–434 (LEGLCIKESS…EVNALRRLVK (104 aa)) form a coiled coil. The 259-residue stretch at 460–718 (FDPSWKLGEG…FIDRMKAPEV (259 aa)) folds into the Protein kinase domain. Residues 466–474 (LGEGKYGSV) and Lys487 each bind ATP. A U-box domain is found at 734–805 (RPPSHYLCPI…LAIQDWQNQW (72 aa)).

It belongs to the protein kinase superfamily. Ser/Thr protein kinase family.

The catalysed reaction is S-ubiquitinyl-[E2 ubiquitin-conjugating enzyme]-L-cysteine + [acceptor protein]-L-lysine = [E2 ubiquitin-conjugating enzyme]-L-cysteine + N(6)-ubiquitinyl-[acceptor protein]-L-lysine.. Its pathway is protein modification; protein ubiquitination. Its function is as follows. Functions as an E3 ubiquitin ligase. In Arabidopsis thaliana (Mouse-ear cress), this protein is U-box domain-containing protein 32 (PUB32).